The chain runs to 344 residues: Anthranilate phosphoribosyltransferase (344 aa).

5-phospho-alpha-D-ribose 1-diphosphate contacts are provided by residues G81, 84-85 (GD), S89, 91-94 (NIST), 109-117 (KHGNRALSS), and A121. G81 provides a ligand contact to anthranilate. S93 provides a ligand contact to Mg(2+). N112 lines the anthranilate pocket. Position 167 (R167) interacts with anthranilate. Residues D226 and E227 each coordinate Mg(2+).

This sequence belongs to the anthranilate phosphoribosyltransferase family. Homodimer. Mg(2+) is required as a cofactor.

The enzyme catalyses N-(5-phospho-beta-D-ribosyl)anthranilate + diphosphate = 5-phospho-alpha-D-ribose 1-diphosphate + anthranilate. Its pathway is amino-acid biosynthesis; L-tryptophan biosynthesis; L-tryptophan from chorismate: step 2/5. In terms of biological role, catalyzes the transfer of the phosphoribosyl group of 5-phosphorylribose-1-pyrophosphate (PRPP) to anthranilate to yield N-(5'-phosphoribosyl)-anthranilate (PRA). The sequence is that of Anthranilate phosphoribosyltransferase from Azorhizobium caulinodans (strain ATCC 43989 / DSM 5975 / JCM 20966 / LMG 6465 / NBRC 14845 / NCIMB 13405 / ORS 571).